We begin with the raw amino-acid sequence, 335 residues long: 3-ketodihydrosphingosine reductase TSC10 (335 aa).

NADPH contacts are provided by glycine 42, serine 44, serine 45, and glycine 46. Residues 42–46 carry the GXSXG motif; it reads GGSSG. Residue leucine 47 coordinates NADP(+). NADPH contacts are provided by arginine 67, aspartate 68, lysine 71, aspartate 95, and leucine 96. Aspartate 95 contributes to the NADP(+) binding site. The NADP(+) site is built by tyrosine 190, lysine 194, and isoleucine 223. The active-site Proton acceptor is the tyrosine 190. The active-site Lowers pKa of active site Tyr is lysine 194. A helical transmembrane segment spans residues 288–308; the sequence is TNNFLLDTLWLIVSSVGVPIW.

It belongs to the short-chain dehydrogenases/reductases (SDR) family.

It localises to the endoplasmic reticulum membrane. The catalysed reaction is sphinganine + NADP(+) = 3-oxosphinganine + NADPH + H(+). It functions in the pathway lipid metabolism; sphingolipid metabolism. Its function is as follows. Catalyzes the reduction of 3'-oxosphinganine (3-ketodihydrosphingosine/KDS) to sphinganine (dihydrosphingosine/DHS), the second step of de novo sphingolipid biosynthesis. The chain is 3-ketodihydrosphingosine reductase TSC10 (TSC10) from Cryptococcus neoformans var. neoformans serotype D (strain B-3501A) (Filobasidiella neoformans).